The primary structure comprises 383 residues: MDSGDFSPMQSNFSLGFMSFEDIPEDARTTEMIDKIVFEEDKEYDHTQDSFRYGRVTTGVSYNLVTGKIPKTVFEQVKAKDDENDNVEFEMEHLEDKETAHKTQTFDELYESQMPKYFDYQSNFSDVNGIWTLLFDQNHYEKMSTFELQAAICAALNSKHFMMICVGIDAFNAVTGVEMSAKDRVVFRMALTRAVAGEFQPPLVKVAPKQLTGVSPMKRDISEVTSSIDVLFVPVIGVTDEVENNRFLIVVRVKEISDKVYQISSGRIYNEQEGRVVEMSDMNEAFHKLIVEKSISDIQTRRGSMFMLEPEPFLEDSAVIFTESNEIPSENHEISRVHVKNCTERSLSQSLLNLLDIQNIGWIFFGTALSFCIYNNAIKPLVK.

The SLFN-like fold stretch occupies residues 118–266; the sequence is FDYQSNFSDV…SDKVYQISSG (149 aa). Residues 354–374 traverse the membrane as a helical segment; the sequence is LLDIQNIGWIFFGTALSFCIY.

The protein belongs to the Schlafen family. As to quaternary structure, component of the PUCH (precursor of 21U RNA 5'-end cleavage holoenzyme) complex; consisting of tofu-1, tofu-2 and either slfl-3 or slfl-4. Within the complex, interacts (via N-terminus) with tofu-2 (via N-terminus); the presence of tofu-1 is required for the interaction.

The protein localises to the mitochondrion membrane. Component of the trimeric PUCH (precursor of 21U RNA 5'-end cleavage holoenzyme) complex, that acts as an endoribonuclease processing the 5'-end of precursor Piwi-interacting RNAs (piRNAs). The PUCH complex consists of tofu-1, tofu-2 and either slfl-3 or slfl-4, where tofu-2 exhibits endoribonuclease activity. PUCH-mediated processing strictly requires a 7-methyl-G cap (m7 G-cap) and an uracil at position three (U3). PUCH also exhibits a strict bias for piRNA precursors with an A or G at position 1. Mature piRNA production is enhanced by the interaction of PUCH with the PETISCO complex, which is stabilizing piRNA precursors and allows their processing by PUCH. This is Schlafen-like protein 3 from Caenorhabditis elegans.